A 281-amino-acid polypeptide reads, in one-letter code: Ribosomal protein L11 methyltransferase (281 aa).

The S-adenosyl-L-methionine site is built by threonine 133, glycine 154, aspartate 175, and asparagine 216.

The protein belongs to the methyltransferase superfamily. PrmA family.

Its subcellular location is the cytoplasm. The enzyme catalyses L-lysyl-[protein] + 3 S-adenosyl-L-methionine = N(6),N(6),N(6)-trimethyl-L-lysyl-[protein] + 3 S-adenosyl-L-homocysteine + 3 H(+). Functionally, methylates ribosomal protein L11. In Campylobacter jejuni (strain RM1221), this protein is Ribosomal protein L11 methyltransferase.